The chain runs to 140 residues: Putative pre-16S rRNA nuclease (140 aa).

This sequence belongs to the YqgF nuclease family.

It localises to the cytoplasm. In terms of biological role, could be a nuclease involved in processing of the 5'-end of pre-16S rRNA. The sequence is that of Putative pre-16S rRNA nuclease from Lachnospira eligens (strain ATCC 27750 / DSM 3376 / VPI C15-48 / C15-B4) (Eubacterium eligens).